The chain runs to 64 residues: Large ribosomal subunit protein uL30 (64 aa).

Belongs to the universal ribosomal protein uL30 family. Part of the 50S ribosomal subunit.

The chain is Large ribosomal subunit protein uL30 from Rhodopseudomonas palustris (strain HaA2).